The primary structure comprises 424 residues: Phosphoprotein associated with glycosphingolipid-enriched microdomains 1 (424 aa).

Topologically, residues 1 to 17 (MGPAGSALSSGQMQMQM) are extracellular. A helical; Signal-anchor for type III membrane protein transmembrane segment spans residues 18-38 (VLWGSLAAVAMFFLITFLILL). 2 S-palmitoyl cysteine lipidation sites follow: Cys-39 and Cys-42. At 39–424 (CSSCDRDKKP…LQQGRDVTRL (386 aa)) the chain is on the cytoplasmic side. Ser-52 and Ser-63 each carry phosphoserine. Tyr-107 bears the Phosphotyrosine; by LYN mark. At Ser-157 the chain carries Phosphoserine. A phosphotyrosine mark is found at Tyr-165, Tyr-183, and Tyr-224. Residues 194 to 347 (DKSQGGKSKS…GPPQRSSSSC (154 aa)) are disordered. Residues 215 to 230 (AEGKADFAEYASVDRN) are compositionally biased toward basic and acidic residues. A Phosphoserine modification is found at Ser-226. Polar residues predominate over residues 236-247 (STNAESILGTSS). A Phosphotyrosine; by FYN and LYN modification is found at Tyr-314. The segment at 314 to 317 (YSSV) is interaction with CSK. Polar residues predominate over residues 331 to 347 (STCQCPQGPPQRSSSSC). Ser-346 bears the Phosphoserine mark. 3 positions are modified to phosphotyrosine: Tyr-351, Tyr-381, and Tyr-409. The disordered stretch occupies residues 361-424 (PNSISMLPPA…LQQGRDVTRL (64 aa)). Residues 422–424 (TRL) form an interaction with NHERF1 region.

In terms of assembly, interacts with NHERF1/EBP50. In resting T-cells, part of a PAG1-NHERF1-MSN complex which is disrupted upon TCR activation. When phosphorylated, interacts with CSK. Identified in a complex with LYN and STAT3. Interacts with LYN. In terms of processing, palmitoylated. Post-translationally, phosphorylated by FYN on Tyr-314 in resting T-cells; which promotes interaction with CSK. Dephosphorylated by PTPRC/CD45 upon TCR activation; which leads to CSK dissociation. May also be dephosphorylated by PTPN11. Hyperphosphorylated in mast cells upon FCER1 activation. Phosphorylated by LYN in response to EPO. As to expression, ubiquitously expressed, with highest levels in developing brain, lung, thymus, spleen and testis. Present in mast cells.

The protein localises to the cell membrane. Functionally, negatively regulates TCR (T-cell antigen receptor)-mediated signaling in T-cells and FCER1 (high affinity immunoglobulin epsilon receptor)-mediated signaling in mast cells. Promotes CSK activation and recruitment to lipid rafts, which results in LCK inhibition. Inhibits immunological synapse formation by preventing dynamic arrangement of lipid raft proteins. May be involved in cell adhesion signaling. The sequence is that of Phosphoprotein associated with glycosphingolipid-enriched microdomains 1 (Pag1) from Rattus norvegicus (Rat).